We begin with the raw amino-acid sequence, 2410 residues long: Coprinoferrin synthetase (2410 aa).

Residues 237–646 form an adenylation 1 region; the sequence is LERRAKTNPH…GRIDTQIKVR (410 aa). Residues 783–860 enclose the Carrier 1 domain; the sequence is RDCTPLEAEV…DIAQLVHVST (78 aa). The residue at position 820 (Ser820) is an O-(pantetheine 4'-phosphoryl)serine. The condensation 1 stretch occupies residues 891–1260; the sequence is DILPPFPVQE…SVEAVVNVHD (370 aa). A disordered region spans residues 1298–1317; the sequence is ELPLPSRRSPEPVRKVNDDE. The span at 1305–1314 shows a compositional bias: basic and acidic residues; sequence RSPEPVRKVN. The region spanning 1324-1400 is the Carrier 2 domain; the sequence is LLDPVVVADL…RLARVVSNNK (77 aa). An O-(pantetheine 4'-phosphoryl)serine modification is found at Ser1361. A condensation 2 region spans residues 1436–1839; the sequence is IIPSTALQSG…RIGRTFSVPS (404 aa). Residues 1858–1932 enclose the Carrier 3 domain; the sequence is VQAGIIHPVL…DLVLQATEIK (75 aa). Residue Ser1893 is modified to O-(pantetheine 4'-phosphoryl)serine. Residues 1992–2315 form a condensation 3 region; sequence FQYLFTFKLP…TPIFNVNVNV (324 aa).

The protein belongs to the NRP synthetase family.

The protein operates within siderophore biosynthesis. Its function is as follows. Nonribosomal peptide synthase; part of the gene cluster that mediates the biosynthesis of coprinoferrin, an acylated tripeptide hydroxamate siderophore. The biosynthesis of coprinoferrin depends on the hydroxylation of ornithine to N(5)-hydroxyornithine, catalyzed by the monooxygenase cpf2. The second step, the acylation of N(5)-hydroxy-L-ornithine to yield N(5)-hexanoyl-N(5)-hydroxyl-L-ornithine is catalyzed by a not yet identified acyltransferase. Finally, assembly of coprinoferrin is catalyzed by the nonribosomal peptide synthase (NRPS) cpf1 via amide bond formation between three N(5)-hexanoyl-N(5)-hydroxyl-L-ornithine molecules to release the linear trimer. Interestingly, proteins seemingly not directly related to biosynthesis, such as transcription factors, replication factors, and autophagy-related proteins, are conserved among the clusters homologous to the coprinoferrin cluster, suggesting that the cluster may also play developmental and cell biological functions. This chain is Coprinoferrin synthetase, found in Coprinopsis cinerea (strain Okayama-7 / 130 / ATCC MYA-4618 / FGSC 9003) (Inky cap fungus).